The sequence spans 64 residues: Metallothionein-A (64 aa).

The protein belongs to the metallothionein superfamily. Type 4 family.

In terms of biological role, metallothioneins have a high content of cysteine residues that bind various heavy metals. The protein is Metallothionein-A (MTA) of Strongylocentrotus purpuratus (Purple sea urchin).